Reading from the N-terminus, the 244-residue chain is Zinc import ATP-binding protein ZnuC 2 (244 aa).

The 216-residue stretch at 3–218 (IGCASLTIQL…PEYLALFGID (216 aa)) folds into the ABC transporter domain. 35 to 42 (GPNGSGKT) lines the ATP pocket.

It belongs to the ABC transporter superfamily. Zinc importer (TC 3.A.1.15.5) family. The complex is composed of two ATP-binding proteins (ZnuC), two transmembrane proteins (ZnuB) and a solute-binding protein (ZnuA).

The protein localises to the cell inner membrane. The catalysed reaction is Zn(2+)(out) + ATP(in) + H2O(in) = Zn(2+)(in) + ADP(in) + phosphate(in) + H(+)(in). Part of the ABC transporter complex ZnuABC involved in zinc import. Responsible for energy coupling to the transport system. This is Zinc import ATP-binding protein ZnuC 2 from Hahella chejuensis (strain KCTC 2396).